The chain runs to 357 residues: Chorismate synthase (357 aa).

2 residues coordinate NADP(+): R48 and R54. FMN contacts are provided by residues 125–127 (RSS), 243–244 (NA), G283, 298–302 (KPTSS), and R324.

The protein belongs to the chorismate synthase family. Homotetramer. FMNH2 is required as a cofactor.

The catalysed reaction is 5-O-(1-carboxyvinyl)-3-phosphoshikimate = chorismate + phosphate. Its pathway is metabolic intermediate biosynthesis; chorismate biosynthesis; chorismate from D-erythrose 4-phosphate and phosphoenolpyruvate: step 7/7. Its function is as follows. Catalyzes the anti-1,4-elimination of the C-3 phosphate and the C-6 proR hydrogen from 5-enolpyruvylshikimate-3-phosphate (EPSP) to yield chorismate, which is the branch point compound that serves as the starting substrate for the three terminal pathways of aromatic amino acid biosynthesis. This reaction introduces a second double bond into the aromatic ring system. The polypeptide is Chorismate synthase (Pasteurella multocida (strain Pm70)).